A 148-amino-acid polypeptide reads, in one-letter code: Cdc42 effector protein 5 (148 aa).

Disordered regions lie at residues 1–89 (MPVL…DPLL) and 111–148 (RPEA…VIGL). The CRIB domain maps to 23-37 (ISAPLGDFRHTLHVG). Arg-38 carries the post-translational modification Omega-N-methylarginine. Pro residues predominate over residues 55–76 (GPPPEPRAPPAGAPRSPPPPAV). Positions 77 to 87 (PQSAAPSPADP) are enriched in low complexity.

Belongs to the BORG/CEP family. Interacts with CDC42, in a GTP-dependent manner, and with SEPT7.

Its subcellular location is the endomembrane system. The protein localises to the cytoplasm. The protein resides in the cytoskeleton. Its function is as follows. Probably involved in the organization of the actin cytoskeleton. May act downstream of CDC42 to induce actin filament assembly leading to cell shape changes. Induces pseudopodia formation in fibroblasts. Inhibits MAPK8 independently of CDC42 binding. Controls septin organization and this effect is negatively regulated by CDC42. In Homo sapiens (Human), this protein is Cdc42 effector protein 5 (CDC42EP5).